Consider the following 141-residue polypeptide: Protein X (141 aa).

The tract at residues 24-52 (QSSGPPFPRPAAGSAASSTSSPSPSDESD) is disordered. Residues 33–48 (PAAGSAASSTSSPSPS) show a composition bias toward low complexity. The tract at residues 68–113 (PCCLVFTCADLRTMDSTVNFVSWHAKRQLGMPSKDLWTPYIKDQLL) is mitochondrial targeting sequence.

The protein belongs to the orthohepadnavirus protein X family. As to quaternary structure, may form homodimer. May interact with host CEBPA, CFLAR, CREB1, DDB1, E4F1, HBXIP, HSPD1/HSP60, NFKBIA, POLR2E and SMAD4. Interacts with host SMC5-SMC6 complex and induces its degradation. Interacts with host TRPC4AP; leading to prevent ubiquitination of TRPC4AP. Interacts with host PLSCR1; this interaction promotes ubiquitination and degradation of HBx and impairs HBx-mediated cell proliferation. In terms of processing, a fraction may be phosphorylated in insect cells and HepG2 cells, a human hepatoblastoma cell line. Phosphorylated in vitro by host protein kinase C or mitogen-activated protein kinase. N-acetylated in insect cells.

Its subcellular location is the host cytoplasm. It is found in the host nucleus. The protein localises to the host mitochondrion. In terms of biological role, multifunctional protein that plays a role in silencing host antiviral defenses and promoting viral transcription. Does not seem to be essential for HBV infection. May be directly involved in development of cirrhosis and liver cancer (hepatocellular carcinoma). Most of cytosolic activities involve modulation of cytosolic calcium. The effect on apoptosis is controversial depending on the cell types in which the studies have been conducted. May induce apoptosis by localizing in mitochondria and causing loss of mitochondrial membrane potential. May also modulate apoptosis by binding host CFLAR, a key regulator of the death-inducing signaling complex (DISC). Promotes viral transcription by using the host E3 ubiquitin ligase DDB1 to target the SMC5-SMC6 complex to proteasomal degradation. This host complex would otherwise bind to viral episomal DNA, and prevents its transcription. Moderately stimulates transcription of many different viral and cellular transcription elements. Promoters and enhancers stimulated by HBx contain DNA binding sites for NF-kappa-B, AP-1, AP-2, c-EBP, ATF/CREB, or the calcium-activated factor NF-AT. The polypeptide is Protein X (Marmota monax (Woodchuck)).